The primary structure comprises 141 residues: Nucleoside diphosphate kinase (141 aa).

ATP is bound by residues K11, F59, R87, T93, R104, and N114. H117 serves as the catalytic Pros-phosphohistidine intermediate.

This sequence belongs to the NDK family. As to quaternary structure, homotetramer. Mg(2+) is required as a cofactor.

Its subcellular location is the cytoplasm. The catalysed reaction is a 2'-deoxyribonucleoside 5'-diphosphate + ATP = a 2'-deoxyribonucleoside 5'-triphosphate + ADP. It carries out the reaction a ribonucleoside 5'-diphosphate + ATP = a ribonucleoside 5'-triphosphate + ADP. In terms of biological role, major role in the synthesis of nucleoside triphosphates other than ATP. The ATP gamma phosphate is transferred to the NDP beta phosphate via a ping-pong mechanism, using a phosphorylated active-site intermediate. This chain is Nucleoside diphosphate kinase, found in Vibrio vulnificus (strain CMCP6).